The following is a 676-amino-acid chain: DNA ligase (676 aa).

Residues 35 to 39 (DNEYD), 84 to 85 (SL), and Glu-115 contribute to the NAD(+) site. Lys-117 functions as the N6-AMP-lysine intermediate in the catalytic mechanism. Residues Arg-138, Glu-177, Lys-294, and Lys-318 each contribute to the NAD(+) site. Cys-412, Cys-415, Cys-430, and Cys-436 together coordinate Zn(2+). Residues 595–676 (PTRQPLNGES…FLAFLAQYSA (82 aa)) enclose the BRCT domain.

It belongs to the NAD-dependent DNA ligase family. LigA subfamily. Mg(2+) serves as cofactor. The cofactor is Mn(2+).

The catalysed reaction is NAD(+) + (deoxyribonucleotide)n-3'-hydroxyl + 5'-phospho-(deoxyribonucleotide)m = (deoxyribonucleotide)n+m + AMP + beta-nicotinamide D-nucleotide.. In terms of biological role, DNA ligase that catalyzes the formation of phosphodiester linkages between 5'-phosphoryl and 3'-hydroxyl groups in double-stranded DNA using NAD as a coenzyme and as the energy source for the reaction. It is essential for DNA replication and repair of damaged DNA. The polypeptide is DNA ligase (Acinetobacter baylyi (strain ATCC 33305 / BD413 / ADP1)).